Consider the following 283-residue polypeptide: Bifunctional protein FolD (283 aa).

NADP(+)-binding positions include 164–166 (GRS), Ser189, and Ile230.

Belongs to the tetrahydrofolate dehydrogenase/cyclohydrolase family. In terms of assembly, homodimer.

It catalyses the reaction (6R)-5,10-methylene-5,6,7,8-tetrahydrofolate + NADP(+) = (6R)-5,10-methenyltetrahydrofolate + NADPH. The catalysed reaction is (6R)-5,10-methenyltetrahydrofolate + H2O = (6R)-10-formyltetrahydrofolate + H(+). It participates in one-carbon metabolism; tetrahydrofolate interconversion. Its function is as follows. Catalyzes the oxidation of 5,10-methylenetetrahydrofolate to 5,10-methenyltetrahydrofolate and then the hydrolysis of 5,10-methenyltetrahydrofolate to 10-formyltetrahydrofolate. This Lacticaseibacillus paracasei (strain ATCC 334 / BCRC 17002 / CCUG 31169 / CIP 107868 / KCTC 3260 / NRRL B-441) (Lactobacillus paracasei) protein is Bifunctional protein FolD.